Consider the following 144-residue polypeptide: Bacilliredoxin BCE_4227 (144 aa).

It belongs to the bacilliredoxin family.

In Bacillus cereus (strain ATCC 10987 / NRS 248), this protein is Bacilliredoxin BCE_4227.